Consider the following 298-residue polypeptide: GTPase Era (298 aa).

The 169-residue stretch at 8–176 (HCGSVAVIGR…VRDVLALLPE (169 aa)) folds into the Era-type G domain. A G1 region spans residues 16–23 (GRPNVGKS). GTP is bound at residue 16–23 (GRPNVGKS). The interval 42–46 (QTTRH) is G2. A G3 region spans residues 63–66 (DTPG). GTP is bound by residues 63–67 (DTPGL) and 125–128 (NKID). Residues 125–128 (NKID) are G4. The interval 155–157 (ISA) is G5. Residues 199–283 (VREQLMRQLG…FLETWVRVRE (85 aa)) enclose the KH type-2 domain.

The protein belongs to the TRAFAC class TrmE-Era-EngA-EngB-Septin-like GTPase superfamily. Era GTPase family. In terms of assembly, monomer.

Its subcellular location is the cytoplasm. It localises to the cell inner membrane. In terms of biological role, an essential GTPase that binds both GDP and GTP, with rapid nucleotide exchange. Plays a role in 16S rRNA processing and 30S ribosomal subunit biogenesis and possibly also in cell cycle regulation and energy metabolism. In Stenotrophomonas maltophilia (strain R551-3), this protein is GTPase Era.